Consider the following 149-residue polypeptide: Nucleoside diphosphate kinase (149 aa).

Residues Lys-9, Phe-57, Arg-85, Thr-91, Arg-102, and Asn-112 each contribute to the ATP site. His-115 serves as the catalytic Pros-phosphohistidine intermediate.

This sequence belongs to the NDK family. As to quaternary structure, homotetramer. Mg(2+) is required as a cofactor.

Its subcellular location is the cytoplasm. It carries out the reaction a 2'-deoxyribonucleoside 5'-diphosphate + ATP = a 2'-deoxyribonucleoside 5'-triphosphate + ADP. The catalysed reaction is a ribonucleoside 5'-diphosphate + ATP = a ribonucleoside 5'-triphosphate + ADP. Major role in the synthesis of nucleoside triphosphates other than ATP. The ATP gamma phosphate is transferred to the NDP beta phosphate via a ping-pong mechanism, using a phosphorylated active-site intermediate. The protein is Nucleoside diphosphate kinase of Staphylococcus haemolyticus (strain JCSC1435).